A 264-amino-acid polypeptide reads, in one-letter code: Tryptophan synthase alpha chain (264 aa).

Catalysis depends on proton acceptor residues glutamate 49 and aspartate 60.

This sequence belongs to the TrpA family. Tetramer of two alpha and two beta chains.

It carries out the reaction (1S,2R)-1-C-(indol-3-yl)glycerol 3-phosphate + L-serine = D-glyceraldehyde 3-phosphate + L-tryptophan + H2O. The protein operates within amino-acid biosynthesis; L-tryptophan biosynthesis; L-tryptophan from chorismate: step 5/5. In terms of biological role, the alpha subunit is responsible for the aldol cleavage of indoleglycerol phosphate to indole and glyceraldehyde 3-phosphate. This Geotalea daltonii (strain DSM 22248 / JCM 15807 / FRC-32) (Geobacter daltonii) protein is Tryptophan synthase alpha chain.